A 460-amino-acid polypeptide reads, in one-letter code: MVDKREEVMHVAMFPWLAMGHLLPFLRLSKLLAQKGHKISFISTPRNIERLPKLQSNLASSITFVSFPLPPISGLPPSSESSMDVPYNKQQSLKAAFDLLQPPLKEFLRRSSPDWIIYDYASHWLPSIAAELGISKAFFSLFNAATLCFMGPSSSLIEEIRSTPEDFTVVPPWVPFKSNIVFRYHEVTRYVEKTEEDVTGVSDSVRFGYSIDESDAVFVRSCPEFEPEWFGLLKDLYRKPVFPIGFLPPVIEDDDAVDTTWVRIKKWLDKQRLNSVVYVSLGTEASLRHEEVTELALGLEKSETPFFWVLRNEPKIPDGFKTRVKGRGMVHVGWVPQVKILSHESVGGFLTHCGWNSVVEGLGFGKVPIFFPVLNEQGLNTRLLHGKGLGVEVSRDERDGSFDSDSVADSIRLVMIDDAGEEIRAKAKVMKDLFGNMDENIRYVDELVRFMRSKGSSSSS.

UDP-alpha-D-glucose is bound by residues Thr283, 335 to 337, 352 to 360, and 374 to 377; these read VPQ, HCGWNSVVE, and LNEQ.

Belongs to the UDP-glycosyltransferase family.

The chain is UDP-glycosyltransferase 91C1 (UGT91C1) from Arabidopsis thaliana (Mouse-ear cress).